The primary structure comprises 365 residues: Palmitoyltransferase ZDHHC20 (365 aa).

Residues 1 to 14 (MAPWTLWRCCQRVV) are Cytoplasmic-facing. The chain crosses the membrane as a helical span at residues 15–35 (GWVPVLFITFVVVWSYYAYVV). The Lumenal segment spans residues 36-53 (ELCVFTIFGNEENGKTVV). Residues 54–74 (YLVAFHLFFVMFVWSYWMTIF) form a helical membrane-spanning segment. Over 75 to 169 (TSPASPSKEF…NNCVGFSNYK (95 aa)) the chain is Cytoplasmic. A DHHC domain is found at 126–176 (RYCEKCQLIKPDRAHHCSACDSCILKMDHHCPWVNNCVGFSNYKFFLLFLL). Residues Cys-128 and Cys-131 each coordinate Zn(2+). Residues Lys-135 and 140–143 (HHCS) contribute to the substrate site. Residues His-141, Cys-142, Cys-145, Cys-148, and His-155 each coordinate Zn(2+). Cys-156 (S-palmitoyl cysteine intermediate) is an active-site residue. Position 162 (Cys-162) interacts with Zn(2+). The helical transmembrane segment at 170-190 (FFLLFLLYSLLYCLFVAATVL) threads the bilayer. Residues 191-207 (EYFIKFWTNELTDTRAK) lie on the Lumenal side of the membrane. Residues 208–231 (FHVLFLFFVSAMFFISVLSLFSYH) form a helical membrane-spanning segment. Residues 232–365 (CWLVGKNRTT…NNHVTVAIEN (134 aa)) lie on the Cytoplasmic side of the membrane. Phosphoserine is present on residues Ser-305, Ser-330, and Ser-339.

Belongs to the DHHC palmitoyltransferase family. In terms of processing, autopalmitoylated (in vitro).

Its subcellular location is the golgi apparatus membrane. The protein localises to the cell membrane. It is found in the cytoplasm. It localises to the perinuclear region. The protein resides in the endoplasmic reticulum membrane. Its subcellular location is the endoplasmic reticulum-Golgi intermediate compartment membrane. The catalysed reaction is L-cysteinyl-[protein] + hexadecanoyl-CoA = S-hexadecanoyl-L-cysteinyl-[protein] + CoA. It carries out the reaction L-cysteinyl-[protein] + tetradecanoyl-CoA = S-tetradecanoyl-L-cysteinyl-[protein] + CoA. It catalyses the reaction L-cysteinyl-[protein] + octadecanoyl-CoA = S-octadecanoyl-L-cysteinyl-[protein] + CoA. Its function is as follows. Palmitoyltransferase that could catalyze the addition of palmitate onto various protein substrates. Catalyzes palmitoylation of Cys residues in the cytoplasmic C-terminus of EGFR, and modulates the duration of EGFR signaling by modulating palmitoylation-dependent EGFR internalization and degradation. Has a preference for acyl-CoA with C16 fatty acid chains. Can also utilize acyl-CoA with C14 and C18 fatty acid chains. May palmitoylate CALHM1 subunit of gustatory voltage-gated ion channels and modulate channel gating and kinetics. (Microbial infection) Dominant palmitoyltransferase responsible for lipidation of SARS coronavirus-2/SARS-CoV-2 spike protein. Through a sequential action with ZDHHC9, rapidly and efficiently palmitoylates spike protein following its synthesis in the endoplasmic reticulum (ER). In the infected cell, promotes spike biogenesis by protecting it from premature ER degradation, increases half-life and controls the lipid organization of its immediate membrane environment. Once the virus has formed, spike palmitoylation controls fusion with the target cell. The sequence is that of Palmitoyltransferase ZDHHC20 from Homo sapiens (Human).